We begin with the raw amino-acid sequence, 101 residues long: AFA-III adhesin operon regulatory protein (101 aa).

Regulates the transcription of genes involved in the biosynthesis of afimbrial adhesin-III. The protein is AFA-III adhesin operon regulatory protein (afaA) of Escherichia coli.